Here is a 204-residue protein sequence, read N- to C-terminus: Nicotine blue oxidoreductase (204 aa).

As to quaternary structure, homotetramer. The cofactor is FMN.

It catalyses the reaction 3,3'-bipyridine-2,2',5,5',6,6'-hexol + NADP(+) = (E)-2,2',5,5'-tetrahydroxy-6H,6'H-(3,3'-bipyridinylidene)-6,6'-dione + NADPH + 3 H(+). It carries out the reaction 3,3'-bipyridine-2,2',5,5',6,6'-hexol + NAD(+) = (E)-2,2',5,5'-tetrahydroxy-6H,6'H-(3,3'-bipyridinylidene)-6,6'-dione + NADH + 3 H(+). Its pathway is alkaloid degradation; nicotine degradation. Catalyzes the reduction of nicotine blue to its hydroquinone form. Nicotine blue is the name given to the compound formed by the autocatalytic condensation of two molecules of 2,3,6-trihydroxypyridine, an intermediate in the nicotine degradation pathway. May play a role in preventing the intracellular formation of nicotine blue semiquinone radicals, which by redox cycling would lead to the formation of toxic reactive oxygen species. Besides nicotine blue, several other quinones are reduced by nboR. In Paenarthrobacter nicotinovorans (Arthrobacter nicotinovorans), this protein is Nicotine blue oxidoreductase (nboR).